The primary structure comprises 490 residues: Tegument protein VP16 (490 aa).

The interval 12–37 is disordered; sequence MDADGASPPPPRPAGGPKNTPAAPPL. Phosphoserine occurs at positions 18, 353, 411, and 452. Residues 411 to 490 form a transcriptional activation region; it reads STAPPTDVSL…DALGIDEYGG (80 aa).

Belongs to the herpesviridae tegument protein VP16 protein family. Interacts with VP22. Interacts with gH (via C-terminus). Interacts with the virion host shutoff protein (vhs). Interacts with VP11/12. Associates with the VP16-induced complex; binding to host HCFC1 activates VP16 for association with the octamer motif-binding host protein POU2F1, to form a multiprotein-DNA complex responsible for activating transcription of the viral immediate early genes.

Its subcellular location is the virion tegument. The protein resides in the host nucleus. Functionally, transcriptional activator of immediate-early (IE) gene products (alpha genes). Acts as a key activator of lytic infection by initiating the lytic program through the assembly of the transcriptional regulatory VP16-induced complex composed of VP16 and two cellular factors, HCFC1 and POU2F 1. VP16-induced complex represents a regulatory switch: when it is on, it promotes IE-gene expression and thus lytic infection, and when it is off, it limits IE-gene transcription favoring latent infection. Its function is as follows. May play a role in the aggregation of tegument proteins around nucleocapsids during virus morphogenesis. This is Tegument protein VP16 from Homo sapiens (Human).